The chain runs to 581 residues: Protein alan shepard (581 aa).

Over residues 1–10 the composition is skewed to pro residues; the sequence is MHPRYSPAPP. The tract at residues 1–73 is disordered; the sequence is MHPRYSPAPP…AVTAAPPTPR (73 aa). Tyrosine 5 carries the post-translational modification Phosphotyrosine. Positions 35–54 are enriched in polar residues; sequence ANNSQQLPPQMPRSQNYANG. Low complexity predominate over residues 55–68; it reads SSSSAAAASAVTAA. Phosphotyrosine occurs at positions 128 and 146. A compositionally biased stretch (low complexity) spans 168-226; it reads PATTTYGQRVPTAASPSNTNSSSSSNTGSQSGTLSTSLSHTTNTNTNMGPNGTAQNQNQ. The disordered stretch occupies residues 168-234; sequence PATTTYGQRV…NQQGGGGEQL (67 aa). RRM domains are found at residues 237–310 and 316–395; these read TNLY…MAKQ and TNLY…FADG. Residues 555–581 form a disordered region; sequence MTDSEQASTAASPDEAYTQYPHQAAPK.

Has a role in the perception of gravity. The sequence is that of Protein alan shepard from Drosophila willistoni (Fruit fly).